Consider the following 662-residue polypeptide: Transcription activator of gluconeogenesis NECHADRAFT_59099 (662 aa).

Residues methionine 1–lysine 61 are disordered. Basic and acidic residues-rich tracts occupy residues threonine 25–threonine 34 and threonine 43–arginine 56. The zn(2)-C6 fungal-type DNA-binding region spans cysteine 66–cysteine 94. Disordered stretches follow at residues leucine 105–asparagine 149, tyrosine 502–proline 524, and tyrosine 580–valine 606. 2 stretches are compositionally biased toward polar residues: residues tyrosine 121 to threonine 130 and serine 137 to asparagine 149. A PAS domain is found at threonine 448–glycine 519. Positions alanine 582–serine 593 are enriched in basic and acidic residues.

Belongs to the ERT1/acuK family.

It localises to the nucleus. Transcription factor which regulates nonfermentable carbon utilization. Activator of gluconeogenetic genes. In Fusarium vanettenii (strain ATCC MYA-4622 / CBS 123669 / FGSC 9596 / NRRL 45880 / 77-13-4) (Fusarium solani subsp. pisi), this protein is Transcription activator of gluconeogenesis NECHADRAFT_59099.